The primary structure comprises 613 residues: Dihydroxy-acid dehydratase (613 aa).

Asp-81 contributes to the Mg(2+) binding site. Cys-122 contributes to the [2Fe-2S] cluster binding site. Mg(2+)-binding residues include Asp-123 and Lys-124. Lys-124 is subject to N6-carboxylysine. Cys-195 is a [2Fe-2S] cluster binding site. Residue Glu-491 participates in Mg(2+) binding. The Proton acceptor role is filled by Ser-517.

It belongs to the IlvD/Edd family. In terms of assembly, homodimer. The cofactor is [2Fe-2S] cluster. It depends on Mg(2+) as a cofactor.

The catalysed reaction is (2R)-2,3-dihydroxy-3-methylbutanoate = 3-methyl-2-oxobutanoate + H2O. It catalyses the reaction (2R,3R)-2,3-dihydroxy-3-methylpentanoate = (S)-3-methyl-2-oxopentanoate + H2O. The protein operates within amino-acid biosynthesis; L-isoleucine biosynthesis; L-isoleucine from 2-oxobutanoate: step 3/4. Its pathway is amino-acid biosynthesis; L-valine biosynthesis; L-valine from pyruvate: step 3/4. Its function is as follows. Functions in the biosynthesis of branched-chain amino acids. Catalyzes the dehydration of (2R,3R)-2,3-dihydroxy-3-methylpentanoate (2,3-dihydroxy-3-methylvalerate) into 2-oxo-3-methylpentanoate (2-oxo-3-methylvalerate) and of (2R)-2,3-dihydroxy-3-methylbutanoate (2,3-dihydroxyisovalerate) into 2-oxo-3-methylbutanoate (2-oxoisovalerate), the penultimate precursor to L-isoleucine and L-valine, respectively. This is Dihydroxy-acid dehydratase from Buchnera aphidicola subsp. Schlechtendalia chinensis.